The following is a 557-amino-acid chain: MRSDMIKKGFDKAPHRSLLKATGLKDEDFDKPFIAICNSFIEIIPGHKHLNEFGKLVKEAVRAAGMVPFEFNTIGVDDGIAMGHIGMRYSLPSREIIADSVETVVNAHWFDGMICIPNCDKITPGMMMAALRINIPTVFVSGGPMAAGKTSKGEVVDLSSVFEGVGAYQSGKISEEELKDIEDHGCPSCGSCSGMFTANSMNCLCEVLGLALPGNGSILAIDPRREELIKQAAEKLKILIERDIKPRDIVTEEAIDDAFALDMAMGGSTNTVLHTLALAQEAGLDYDMNRIDAVSRRVPHLCKVSPASNWHMEDIDRAGGISAILKEISRKEGVLHLDRITATGQTLRENIAHAEIKDKEVIHSLENPHSEEGGLRILKGNLAKDGAVIKSGATEVKRFEGPCVIFNSQDEALAGIMLGKVKKGDVVVIRYEGPRGGPGMPEMLAPTSAIAGMGLGADVALLTDGRFSGASRGISVGHISPEAAAGGTIALLEQGDIVCIDVEERLLEVRVSDEELDKRKKEWKRPEAKVKTGWLGRYAQMVTSANTGAVLKIPDFD.

Mg(2+) is bound at residue Asp-78. [2Fe-2S] cluster is bound at residue Cys-119. Mg(2+)-binding residues include Asp-120 and Lys-121. Lys-121 carries the post-translational modification N6-carboxylysine. Cys-192 provides a ligand contact to [2Fe-2S] cluster. Residue Glu-442 participates in Mg(2+) binding. The Proton acceptor role is filled by Ser-468.

It belongs to the IlvD/Edd family. As to quaternary structure, homodimer. The cofactor is [2Fe-2S] cluster. Mg(2+) is required as a cofactor.

The enzyme catalyses (2R)-2,3-dihydroxy-3-methylbutanoate = 3-methyl-2-oxobutanoate + H2O. It catalyses the reaction (2R,3R)-2,3-dihydroxy-3-methylpentanoate = (S)-3-methyl-2-oxopentanoate + H2O. It functions in the pathway amino-acid biosynthesis; L-isoleucine biosynthesis; L-isoleucine from 2-oxobutanoate: step 3/4. Its pathway is amino-acid biosynthesis; L-valine biosynthesis; L-valine from pyruvate: step 3/4. Its function is as follows. Functions in the biosynthesis of branched-chain amino acids. Catalyzes the dehydration of (2R,3R)-2,3-dihydroxy-3-methylpentanoate (2,3-dihydroxy-3-methylvalerate) into 2-oxo-3-methylpentanoate (2-oxo-3-methylvalerate) and of (2R)-2,3-dihydroxy-3-methylbutanoate (2,3-dihydroxyisovalerate) into 2-oxo-3-methylbutanoate (2-oxoisovalerate), the penultimate precursor to L-isoleucine and L-valine, respectively. This Bacillus cereus (strain G9842) protein is Dihydroxy-acid dehydratase.